The chain runs to 647 residues: DNA mismatch repair protein MutL (647 aa).

The segment at lysine 375–glycine 433 is disordered. The span at glutamine 387–glutamine 400 shows a compositional bias: low complexity.

This sequence belongs to the DNA mismatch repair MutL/HexB family.

Functionally, this protein is involved in the repair of mismatches in DNA. It is required for dam-dependent methyl-directed DNA mismatch repair. May act as a 'molecular matchmaker', a protein that promotes the formation of a stable complex between two or more DNA-binding proteins in an ATP-dependent manner without itself being part of a final effector complex. This is DNA mismatch repair protein MutL from Bacillus cereus (strain AH820).